Consider the following 558-residue polypeptide: Urocanate hydratase (558 aa).

NAD(+) contacts are provided by residues 53-54 (GG), Q131, 177-179 (GMG), E197, R202, 243-244 (NA), 264-268 (QTSAH), 274-275 (YL), and Y323. Residue C411 is part of the active site. G493 is a binding site for NAD(+).

The protein belongs to the urocanase family. NAD(+) is required as a cofactor.

The protein resides in the cytoplasm. The enzyme catalyses 4-imidazolone-5-propanoate = trans-urocanate + H2O. It functions in the pathway amino-acid degradation; L-histidine degradation into L-glutamate; N-formimidoyl-L-glutamate from L-histidine: step 2/3. Its function is as follows. Catalyzes the conversion of urocanate to 4-imidazolone-5-propionate. The polypeptide is Urocanate hydratase (Idiomarina loihiensis (strain ATCC BAA-735 / DSM 15497 / L2-TR)).